The following is a 217-amino-acid chain: MDTSRVYGNVKTFRSPGHKQASFPSLSTDACRCPHWHHLALKLGCATLILLLLTLIGLSVFVRFLVQKPLIEKCSMAAQENGTEPTGRSAILECPRHWQPHRNKCLIISQISRPWAEGLVACSMKEATLLIIENEEELKFVQNILKGRQQLFFIGLNYVQTEMTWKWINGSVLKPNILRITGSEVENSCALISHTEVFSDSCSSDNHWICQKTLKHV.

Residues 1–45 lie on the Cytoplasmic side of the membrane; sequence MDTSRVYGNVKTFRSPGHKQASFPSLSTDACRCPHWHHLALKLGC. An LCK-binding motif motif is present at residues 31 to 34; it reads CRCP. A helical; Signal-anchor for type II membrane protein membrane pass occupies residues 46–66; it reads ATLILLLLTLIGLSVFVRFLV. At 67 to 217 the chain is on the extracellular side; sequence QKPLIEKCSM…WICQKTLKHV (151 aa). The C-type lectin domain maps to 101-211; the sequence is HRNKCLIISQ…CSSDNHWICQ (111 aa). Intrachain disulfides connect C122/C210 and C189/C202.

As to expression, expressed in natural killer cells and a subset of T-cells.

It localises to the membrane. In terms of biological role, binds CLEC2I/Clr-g leading to activation of natural killer cells or stimulation of IL-2 production and proliferation of T-cells in response to antigen stimulation. May contribute to the formation of the immunological synapse between T-cells and antigen-presenting dendritic cells. This chain is Killer cell lectin-like receptor subfamily B member 1F, found in Rattus norvegicus (Rat).